Here is a 149-residue protein sequence, read N- to C-terminus: Large ribosomal subunit protein uL13 (149 aa).

The protein belongs to the universal ribosomal protein uL13 family. In terms of assembly, part of the 50S ribosomal subunit.

Functionally, this protein is one of the early assembly proteins of the 50S ribosomal subunit, although it is not seen to bind rRNA by itself. It is important during the early stages of 50S assembly. The chain is Large ribosomal subunit protein uL13 from Chlorobium luteolum (strain DSM 273 / BCRC 81028 / 2530) (Pelodictyon luteolum).